Reading from the N-terminus, the 237-residue chain is Sensory rhodopsin-2 (237 aa).

The Extracellular portion of the chain corresponds to M1–A2. Residues L3–R23 form a helical membrane-spanning segment. Residues D24–H31 are Cytoplasmic-facing. A helical membrane pass occupies residues R32–G53. Topologically, residues L54–Y67 are extracellular. Residues L68–A89 form a helical membrane-spanning segment. The Cytoplasmic portion of the chain corresponds to R90 to G92. Residues H93–L115 traverse the membrane as a helical segment. Residues T116–V119 are Extracellular-facing. Residues Q120–L147 form a helical membrane-spanning segment. The Cytoplasmic portion of the chain corresponds to G148–D150. Residues P151 to S178 form a helical membrane-spanning segment. The Extracellular segment spans residues P179 to Q186. A helical membrane pass occupies residues T187–D214. The residue at position 202 (K202) is an N6-(retinylidene)lysine. At A215–D237 the chain is on the cytoplasmic side.

This sequence belongs to the archaeal/bacterial/fungal opsin family. As to quaternary structure, interacts with HTR-II.

It is found in the cell membrane. Its function is as follows. Photophobic photoreceptor responsible for the negative phototaxis. Activates the sensory rhodopsin II transducer (HTR-II) in response to blue light. The sequence is that of Sensory rhodopsin-2 (sop2) from Halobacterium salinarum (strain ATCC 700922 / JCM 11081 / NRC-1) (Halobacterium halobium).